The sequence spans 497 residues: Probable polyamine oxidase 4 (497 aa).

FAD-binding residues include glutamate 58, arginine 66, valine 247, and glutamate 435. A Microbody targeting signal motif is present at residues 495–497 (SRM).

It belongs to the flavin monoamine oxidase family. Requires FAD as cofactor. As to expression, highly expressed in roots, flowers and greening cotelydons. Lower expression in other tissues.

Its subcellular location is the peroxisome. The catalysed reaction is spermine + O2 + H2O = 3-aminopropanal + spermidine + H2O2. It carries out the reaction spermidine + O2 + H2O = 3-aminopropanal + putrescine + H2O2. It functions in the pathway amine and polyamine degradation; spermine degradation. It participates in amine and polyamine degradation; spermidine degradation. Its function is as follows. Flavoenzyme involved in polyamine back-conversion. Catalyzes the oxidation of the secondary amino group of polyamines, such as spermine and spermidine. Substrate preference is spermine &gt; spermidine. No activity detected when putrescine or N(1)-acetylspermine are used as substrates. Plays an important role in the regulation of polyamine intracellular concentration. This chain is Probable polyamine oxidase 4 (PAO4), found in Arabidopsis thaliana (Mouse-ear cress).